Reading from the N-terminus, the 460-residue chain is A-type ATP synthase subunit B (460 aa).

It belongs to the ATPase alpha/beta chains family. As to quaternary structure, has multiple subunits with at least A(3), B(3), C, D, E, F, H, I and proteolipid K(x).

It localises to the cell membrane. Functionally, component of the A-type ATP synthase that produces ATP from ADP in the presence of a proton gradient across the membrane. The B chain is a regulatory subunit. The sequence is that of A-type ATP synthase subunit B from Thermoplasma volcanium (strain ATCC 51530 / DSM 4299 / JCM 9571 / NBRC 15438 / GSS1).